The chain runs to 429 residues: UDP-N-acetylglucosamine 1-carboxyvinyltransferase (429 aa).

A phosphoenolpyruvate-binding site is contributed by 22–23; the sequence is KN. Arginine 96 serves as a coordination point for UDP-N-acetyl-alpha-D-glucosamine. The active-site Proton donor is the cysteine 120. Cysteine 120 carries the 2-(S-cysteinyl)pyruvic acid O-phosphothioketal modification. UDP-N-acetyl-alpha-D-glucosamine is bound by residues 125-129, aspartate 310, and isoleucine 332; that span reads RPVDL.

The protein belongs to the EPSP synthase family. MurA subfamily.

The protein localises to the cytoplasm. It carries out the reaction phosphoenolpyruvate + UDP-N-acetyl-alpha-D-glucosamine = UDP-N-acetyl-3-O-(1-carboxyvinyl)-alpha-D-glucosamine + phosphate. Its pathway is cell wall biogenesis; peptidoglycan biosynthesis. In terms of biological role, cell wall formation. Adds enolpyruvyl to UDP-N-acetylglucosamine. The chain is UDP-N-acetylglucosamine 1-carboxyvinyltransferase from Caulobacter vibrioides (strain ATCC 19089 / CIP 103742 / CB 15) (Caulobacter crescentus).